The sequence spans 349 residues: Glucose 1-dehydrogenase 1 (349 aa).

Cysteine 39 contributes to the Zn(2+) binding site. Threonine 41 contacts substrate. The Zn(2+) site is built by histidine 64 and glutamate 65. Substrate is bound by residues glutamate 110 and glutamate 146. Glutamate 146 provides a ligand contact to Zn(2+). Residues 178-181, 260-262, and 289-291 contribute to the NADP(+) site; these read AGPI, LGV, and SVN. Asparagine 291 is a binding site for substrate.

This sequence belongs to the zinc-containing alcohol dehydrogenase family. Glucose 1-dehydrogenase subfamily. The cofactor is Zn(2+).

The catalysed reaction is D-glucose + NAD(+) = D-glucono-1,5-lactone + NADH + H(+). It catalyses the reaction D-glucose + NADP(+) = D-glucono-1,5-lactone + NADPH + H(+). Its function is as follows. Catalyzes the NAD(P)(+)-dependent oxidation of D-glucose to D-gluconate via gluconolactone. Can utilize both NAD(+) and NADP(+) as electron acceptor. Is involved in the degradation of glucose through a non-phosphorylative variant of the Entner-Doudoroff pathway. In Caldivirga maquilingensis (strain ATCC 700844 / DSM 13496 / JCM 10307 / IC-167), this protein is Glucose 1-dehydrogenase 1.